A 116-amino-acid chain; its full sequence is MNLITTIITITITLSAVLATISFWLPQISPDAEKLSPYECGFDPLGSARLPFSLRFFLIAILFLLFDLEIALLLPLPWGDQLHTPTLTLIWSTAVLALLTLGLIYEWTQGGLEWAE.

The next 3 helical transmembrane spans lie at 3–23, 56–76, and 87–107; these read LITT…TISF, FFLI…LLPL, and LTLI…IYEW.

This sequence belongs to the complex I subunit 3 family.

Its subcellular location is the mitochondrion membrane. The enzyme catalyses a ubiquinone + NADH + 5 H(+)(in) = a ubiquinol + NAD(+) + 4 H(+)(out). Functionally, core subunit of the mitochondrial membrane respiratory chain NADH dehydrogenase (Complex I) that is believed to belong to the minimal assembly required for catalysis. Complex I functions in the transfer of electrons from NADH to the respiratory chain. The immediate electron acceptor for the enzyme is believed to be ubiquinone. The protein is NADH-ubiquinone oxidoreductase chain 3 (MT-ND3) of Oncorhynchus mykiss (Rainbow trout).